The primary structure comprises 173 residues: NADH-ubiquinone oxidoreductase chain 6 (173 aa).

A run of 6 helical transmembrane segments spans residues M1–S21, Y27–G47, V48–V68, V87–F107, F113–V133, and C139–L159.

This sequence belongs to the complex I subunit 6 family.

The protein resides in the mitochondrion membrane. The enzyme catalyses a ubiquinone + NADH + 5 H(+)(in) = a ubiquinol + NAD(+) + 4 H(+)(out). Functionally, core subunit of the mitochondrial membrane respiratory chain NADH dehydrogenase (Complex I) that is believed to belong to the minimal assembly required for catalysis. Complex I functions in the transfer of electrons from NADH to the respiratory chain. The immediate electron acceptor for the enzyme is believed to be ubiquinone. This Cepphus grylle (Black guillemot) protein is NADH-ubiquinone oxidoreductase chain 6 (MT-ND6).